Consider the following 458-residue polypeptide: Histone acetyltransferase Tip60 homolog (458 aa).

A disordered region spans residues 1–24 (MTEPKKEIIEDENHGISKKIPTDP). Residues 30–86 (VTEGCRLLVMMASQEEERWAEVISRCRAANGSIKFYVHYIDCNRRLDEWVQSDRLNL) form the Tudor-knot domain. The interval 94 to 123 (KGGKKGAHLREENRDSNENEGKKSGRKRKI) is disordered. Residues 101-116 (HLREENRDSNENEGKK) are compositionally biased toward basic and acidic residues. Residues 168–446 (TRIRNVECIE…INPAALQWRP (279 aa)) enclose the MYST-type HAT domain. A C2HC MYST-type zinc finger spans residues 201 to 226 (IYICEFCLKYLKSKTCLKRHMEKCAM). Residue Lys268 is modified to N6-acetyllysine; by autocatalysis. Residues 311–313 (ILV) and 318–324 (QKKGYGS) each bind acetyl-CoA. Glu344 functions as the Proton donor/acceptor in the catalytic mechanism. Positions 348 and 357 each coordinate acetyl-CoA.

The protein belongs to the MYST (SAS/MOZ) family. In terms of assembly, interacts with transcription-associated protein trr-1. Probably a component of a complex with histone acetyltransferase (HAT) activity, at least composed of mys-1 and trr-1. In terms of processing, autoacetylation at Lys-268 is required for binding histones with high affinity and for proper function.

The protein resides in the nucleus. The enzyme catalyses L-lysyl-[protein] + acetyl-CoA = N(6)-acetyl-L-lysyl-[protein] + CoA + H(+). Probable catalytic subunit of the Tip60 chromatin-remodeling complex. Plays a role in acetylation of nucleosomal histone H4 and perhaps also H2A, probably acting as a component of the Tip60 histone acetyltransferase complex. Acts in the determination of vulval and distal tip cell (DTC) precursor cell fates. Involved in the positive regulation of transcription factor daf-16, probably acting by histone acetylation; thereby modulating stress resistance. The polypeptide is Histone acetyltransferase Tip60 homolog (Caenorhabditis elegans).